Reading from the N-terminus, the 252-residue chain is Imidazole glycerol phosphate synthase subunit HisF (252 aa).

Active-site residues include Asp-11 and Asp-130.

The protein belongs to the HisA/HisF family. As to quaternary structure, heterodimer of HisH and HisF.

It is found in the cytoplasm. The enzyme catalyses 5-[(5-phospho-1-deoxy-D-ribulos-1-ylimino)methylamino]-1-(5-phospho-beta-D-ribosyl)imidazole-4-carboxamide + L-glutamine = D-erythro-1-(imidazol-4-yl)glycerol 3-phosphate + 5-amino-1-(5-phospho-beta-D-ribosyl)imidazole-4-carboxamide + L-glutamate + H(+). The protein operates within amino-acid biosynthesis; L-histidine biosynthesis; L-histidine from 5-phospho-alpha-D-ribose 1-diphosphate: step 5/9. In terms of biological role, IGPS catalyzes the conversion of PRFAR and glutamine to IGP, AICAR and glutamate. The HisF subunit catalyzes the cyclization activity that produces IGP and AICAR from PRFAR using the ammonia provided by the HisH subunit. In Bacillus anthracis (strain CDC 684 / NRRL 3495), this protein is Imidazole glycerol phosphate synthase subunit HisF.